Reading from the N-terminus, the 64-residue chain is Large ribosomal subunit protein bL35 (64 aa).

Belongs to the bacterial ribosomal protein bL35 family.

This Shewanella frigidimarina (strain NCIMB 400) protein is Large ribosomal subunit protein bL35.